A 167-amino-acid polypeptide reads, in one-letter code: Large ribosomal subunit protein uL10 (167 aa).

This sequence belongs to the universal ribosomal protein uL10 family. Part of the ribosomal stalk of the 50S ribosomal subunit. The N-terminus interacts with L11 and the large rRNA to form the base of the stalk. The C-terminus forms an elongated spine to which L12 dimers bind in a sequential fashion forming a multimeric L10(L12)X complex.

Its function is as follows. Forms part of the ribosomal stalk, playing a central role in the interaction of the ribosome with GTP-bound translation factors. The polypeptide is Large ribosomal subunit protein uL10 (Chromohalobacter salexigens (strain ATCC BAA-138 / DSM 3043 / CIP 106854 / NCIMB 13768 / 1H11)).